We begin with the raw amino-acid sequence, 258 residues long: DNA repair protein RecO (258 aa).

The protein belongs to the RecO family.

Functionally, involved in DNA repair and RecF pathway recombination. The sequence is that of DNA repair protein RecO from Lactiplantibacillus plantarum (strain ATCC BAA-793 / NCIMB 8826 / WCFS1) (Lactobacillus plantarum).